The sequence spans 122 residues: Large ribosomal subunit protein uL14 (122 aa).

It belongs to the universal ribosomal protein uL14 family. As to quaternary structure, part of the 50S ribosomal subunit. Forms a cluster with proteins L3 and L19. In the 70S ribosome, L14 and L19 interact and together make contacts with the 16S rRNA in bridges B5 and B8.

Binds to 23S rRNA. Forms part of two intersubunit bridges in the 70S ribosome. The polypeptide is Large ribosomal subunit protein uL14 (Granulibacter bethesdensis (strain ATCC BAA-1260 / CGDNIH1)).